Here is a 224-residue protein sequence, read N- to C-terminus: Pre-hexon-linking protein VIII (224 aa).

Thr64 bears the Phosphothreonine; by host mark. The propeptide occupies 112–154 (RQPSPSHIDIKDTMLAGTGIQLGEDIPSVSWIRPDGIFQLGGG).

The protein belongs to the adenoviridae hexon-linking protein family. As to quaternary structure, interacts with the peripentonal hexons as well as the hexons in the facets. Part of a complex composed of the core-capsid bridging protein, the endosome lysis protein VI and the hexon-linking protein VIII; these interactions bridge the virus core to the capsid. In terms of processing, cleaved by the viral protease during virion maturation. May cause the middle segment to be shed from the capsid.

The protein resides in the virion. It is found in the host nucleus. Its function is as follows. Structural component of the virion that acts as a cement protein on the capsid interior and which glue the peripentonal hexons and group-of-nine hexons together. In Canine adenovirus serotype 1 (strain CLL) (CAdV-1), this protein is Pre-hexon-linking protein VIII.